The following is a 163-amino-acid chain: Cytochrome b6-f complex subunit 4 (163 aa).

The next 3 helical transmembrane spans lie at 36–56 (LLYIFPVVILGTIACNGGLAV), 95–115 (LLGVLLMVSVPAGLLTVPFLE), and 131–151 (TVFLVGTLVALWLGIGATLPI).

The protein belongs to the cytochrome b family. PetD subfamily. In terms of assembly, the 4 large subunits of the cytochrome b6-f complex are cytochrome b6, subunit IV (17 kDa polypeptide, petD), cytochrome f and the Rieske protein, while the 4 small subunits are petG, petL, petM and petN. The complex functions as a dimer.

The protein localises to the plastid. The protein resides in the chloroplast thylakoid membrane. Its function is as follows. Component of the cytochrome b6-f complex, which mediates electron transfer between photosystem II (PSII) and photosystem I (PSI), cyclic electron flow around PSI, and state transitions. This chain is Cytochrome b6-f complex subunit 4, found in Pelargonium hortorum (Common geranium).